The primary structure comprises 239 residues: Fibroblast growth factor 3 (239 aa).

An N-terminal signal peptide occupies residues 1-17; that stretch reads MGLIWLLLLSLLEPGWP. An N-linked (GlcNAc...) asparagine glycan is attached at N65. The segment at 193–239 is disordered; that stretch reads QLQSGLPRPPGKGVQPRRRRQKQSPDNLEPSHVQASRLGSQLEASAH. Over residues 225–239 the composition is skewed to polar residues; it reads VQASRLGSQLEASAH.

The protein belongs to the heparin-binding growth factors family. Interacts with FGFR1 and FGFR2. Affinity between fibroblast growth factors (FGFs) and their receptors is increased by heparan sulfate glycosaminoglycans that function as coreceptors.

It localises to the secreted. Its function is as follows. Plays an important role in the regulation of embryonic development, cell proliferation, and cell differentiation. Required for normal ear development. This is Fibroblast growth factor 3 (FGF3) from Homo sapiens (Human).